A 389-amino-acid chain; its full sequence is GDP-fucose protein O-fucosyltransferase 1 (389 aa).

The first 21 residues, 1 to 21 (MRVSKVLTLASFISVCSYSEA), serve as a signal peptide directing secretion. The N-linked (GlcNAc...) asparagine glycan is linked to Asn24. Cys35 and Cys37 are oxidised to a cystine. Residue 40–43 (RFGN) participates in substrate binding. A disulfide bond links Cys119 and Cys135. 238 to 240 (HLR) contributes to the substrate binding site. 2 disulfide bridges follow: Cys249–Cys281 and Cys266–Cys353. 356-357 (TF) contributes to the substrate binding site.

It belongs to the glycosyltransferase 65 family. Monomer.

Its subcellular location is the endoplasmic reticulum. The catalysed reaction is L-seryl-[protein] + GDP-beta-L-fucose = 3-O-(alpha-L-fucosyl)-L-seryl-[protein] + GDP + H(+). The enzyme catalyses L-threonyl-[protein] + GDP-beta-L-fucose = 3-O-(alpha-L-fucosyl)-L-threonyl-[protein] + GDP + H(+). The protein operates within protein modification; protein glycosylation. Its function is as follows. Catalyzes the reaction that attaches fucose through an O-glycosidic linkage to a conserved serine or threonine residue found in the consensus sequence C2-X(4,5)-[S/T]-C3 of EGF domains, where C2 and C3 are the second and third conserved cysteines. Specifically uses GDP-fucose as donor substrate and proper disulfide pairing of the substrate EGF domains is required for fucose transfer. In Caenorhabditis elegans, this protein is GDP-fucose protein O-fucosyltransferase 1.